Here is a 189-residue protein sequence, read N- to C-terminus: Low affinity inorganic phosphate transporter 2 (189 aa).

At 1–55 the chain is on the cytoplasmic side; sequence TARYTALVAKDAKRAAADMGKVLHVEIDPEDAKVERMAKDESNQFGLFSWEFVRR. A helical membrane pass occupies residues 56–76; it reads HGLHLFGTCSTWFLLDIAFYS. Residues 77–111 are Extracellular-facing; the sequence is QNLFQKDVFTAIGWIPPAKTMNAVQEVYKIARAQT. The chain crosses the membrane as a helical span at residues 112–132; that stretch reads LIALCSTVPGYWFTVAFIDII. The Cytoplasmic portion of the chain corresponds to 133–134; sequence GR. The chain crosses the membrane as a helical span at residues 135-155; sequence FAIQLMGFFFMTVFMFAIAIP. The Extracellular segment spans residues 156 to 165; the sequence is YHHWTLQENR. The chain crosses the membrane as a helical span at residues 166-186; sequence IGFVIMYSLTFFFANFGPNAT. Topologically, residues 187 to 189 are cytoplasmic; sequence TFV.

It belongs to the major facilitator superfamily. Phosphate:H(+) symporter (TC 2.A.1.9) family.

The protein localises to the cell membrane. The catalysed reaction is phosphate(in) + H(+)(in) = phosphate(out) + H(+)(out). Its function is as follows. Low-affinity transporter for external inorganic phosphate (Pi). This chain is Low affinity inorganic phosphate transporter 2, found in Petunia hybrida (Petunia).